A 102-amino-acid polypeptide reads, in one-letter code: Small ribosomal subunit protein uS10 (102 aa).

The protein belongs to the universal ribosomal protein uS10 family. In terms of assembly, part of the 30S ribosomal subunit.

In terms of biological role, involved in the binding of tRNA to the ribosomes. This chain is Small ribosomal subunit protein uS10, found in Brucella abortus (strain S19).